Here is a 316-residue protein sequence, read N- to C-terminus: Ribosomal RNA small subunit methyltransferase H (316 aa).

Residues 35–37 (GGH), aspartate 55, phenylalanine 79, aspartate 101, and glutamine 108 each bind S-adenosyl-L-methionine.

Belongs to the methyltransferase superfamily. RsmH family.

The protein localises to the cytoplasm. The enzyme catalyses cytidine(1402) in 16S rRNA + S-adenosyl-L-methionine = N(4)-methylcytidine(1402) in 16S rRNA + S-adenosyl-L-homocysteine + H(+). Functionally, specifically methylates the N4 position of cytidine in position 1402 (C1402) of 16S rRNA. This chain is Ribosomal RNA small subunit methyltransferase H, found in Aliivibrio fischeri (strain ATCC 700601 / ES114) (Vibrio fischeri).